A 196-amino-acid polypeptide reads, in one-letter code: Rac-like GTP-binding protein ARAC5 (196 aa).

16–21 serves as a coordination point for GTP; it reads AVGKTC. The Effector region signature appears at 35-43; the sequence is YVPTVFDNF. GTP is bound by residues 119-121 and 159-161; these read KLD and SSK. At cysteine 193 the chain carries Cysteine methyl ester. Cysteine 193 carries the S-geranylgeranyl cysteine lipid modification. The propeptide at 194–196 is removed in mature form; that stretch reads VFL.

It belongs to the small GTPase superfamily. Rho family. In terms of assembly, interacts with GDI1 and ROPGEF8 homodimer. Binds to SPK1. In terms of tissue distribution, ubiquitous. Preferentially expressed at the tip of root hairs.

The protein resides in the cytoplasm. Its subcellular location is the membrane. The protein localises to the cell membrane. In terms of biological role, involved in cell polarity control during the actin-dependent tip growth of root hairs, thus regulating root hair length and root hair initiation. Inactive GDP-bound Rho GTPases reside in the cytosol, are found in a complex with Rho GDP-dissociation inhibitors (Rho GDIs), and are released from the GDI protein in order to translocate to membranes upon activation. The chain is Rac-like GTP-binding protein ARAC5 from Arabidopsis thaliana (Mouse-ear cress).